A 537-amino-acid chain; its full sequence is Cytochrome P450 monooxygenase yanC (537 aa).

A signal peptide spans methionine 1–alanine 21. Cysteine 449 lines the heme pocket.

The protein belongs to the cytochrome P450 family. The cofactor is heme.

Its pathway is secondary metabolite biosynthesis; terpenoid biosynthesis. Its function is as follows. Cytochrome P450 monooxygenase; part of the gene cluster that mediates the biosynthesis of yanuthone D, a fungal isoprenoid epoxycyclohexenone that acts as an antibiotic against fungi and bacteria. The first step of the pathway is the synthesis of 6-methylsalicylic acid (6-MSA) by the polyketide synthase yanA. 6-MSA is then converted to m-cresol by the decarboxylase yanB. The cytochrome P450 monooxygenase yanC then catalyzes the oxidation of m-cresol to toluquinol. Epoxidation of toluquinol is then performed by the short chain dehydrogenase yanD, with the help of yanE, and a further prenylation by yanG leads to 7-deacetoxyyanuthone A. The next step is the hydroxylation of C-22 of 7-deacetoxyyanuthone A by the cytochrome P450 monooxygenase yanH to yield 22-deacetylyanuthone A. O-Mevalon transferase yanI then attaches mevalon to the hydroxyl group of 22-deacetylyanuthone A to produce yanuthone E. Finally, the FAD-dependent monooxygenase yanF oxidizes the hydroxyl group at C15 of yanuthone E to form yanuthone D. Furthermore, several branching points in the pathway lead to the production of yanuthones F and G from 7-deacetoxyyanuthone A; yanuthones H and I from 22-deacetylyanuthone A; and yanuthone J from yanuthone E. YanC is also involved in the synthesis of yanuthone X1 which does not have 6-methylsalicylic acid (6-MSA) as precursor. The chain is Cytochrome P450 monooxygenase yanC from Aspergillus niger (strain ATCC 1015 / CBS 113.46 / FGSC A1144 / LSHB Ac4 / NCTC 3858a / NRRL 328 / USDA 3528.7).